A 506-amino-acid polypeptide reads, in one-letter code: MDAPNPKRPCLVPLGTSSIENPCSLPIAPDFNQSNIDLTISSFLSLSDLPLFSLPLSIGCSFDRVLDNVIPSIAGTSRDEFDQDRFLDRTLQLASLLYKSTKRCIRKRATLQNSTSWPLLPELTIKVFSMLDTKSLMQASACCTMFNKCAMDRVCYSHIDLTTAAEDVDNGVVCVMIHRAGKELRSLKLGSISSSAEPTTSLLTRSCLTPLTFNHGFTGGHLRSLHLYHLRMIDCGSLSPVLSACLNLTDLKIVGLDNPLEQLGLLTRNCRLIEHLFIEIYGAAGLITDSSLLEFAANCPNLSSISLLGFLLNDAILQKLIKGFRRLKHINLSSSPEISGCFFRGLELCGKDSPLETLILRDCYILKESEVLLFLNSLLAGDFKYIRLIDVSNVDGLVCDGGNRTFEPRFPIEELKKQRSNVTFVAIFESQSSLSSSRFPLEELNKERPGLTFVAEFRSPSPSESDVRSPSPSSSSDSSSSSDSSSSSSSGESSDESGTEEEEDED.

In terms of domain architecture, F-box spans 115–161 (TSWPLLPELTIKVFSMLDTKSLMQASACCTMFNKCAMDRVCYSHIDL). The tract at residues 452-506 (TFVAEFRSPSPSESDVRSPSPSSSSDSSSSSDSSSSSSSGESSDESGTEEEEDED) is disordered. The span at 459 to 492 (SPSPSESDVRSPSPSSSSDSSSSSDSSSSSSSGE) shows a compositional bias: low complexity. The segment covering 493-506 (SSDESGTEEEEDED) has biased composition (acidic residues).

The polypeptide is F-box protein At4g02760 (Arabidopsis thaliana (Mouse-ear cress)).